Here is a 594-residue protein sequence, read N- to C-terminus: Acyl-coenzyme A thioesterase 11 (594 aa).

Residues 1 to 20 (MIQNVGNHLRRGFASMFSNR) constitute a mitochondrion transit peptide. Phosphoserine is present on residues serine 15 and serine 25. The disordered stretch occupies residues 20–43 (RTSRKSISHPESGDPPTMAEGEGY). One can recognise a HotDog ACOT-type 1 domain in the interval 45–157 (NPTEVQMSQL…LATFVAHREL (113 aa)). CoA contacts are provided by residues 93–95 (TAS), 122–124 (NSS), arginine 183, and 272–274 (HFR). A HotDog ACOT-type 2 domain is found at 217 to 330 (EKTRVESVEL…FMTFVVLDKD (114 aa)). The START domain occupies 370–582 (KQAEVALSVP…FKACESFLLD (213 aa)).

The protein localises to the mitochondrion matrix. It localises to the cytoplasm. It catalyses the reaction hexadecanoyl-CoA + H2O = hexadecanoate + CoA + H(+). It carries out the reaction tetradecanoyl-CoA + H2O = tetradecanoate + CoA + H(+). The catalysed reaction is dodecanoyl-CoA + H2O = dodecanoate + CoA + H(+). The enzyme catalyses butanoyl-CoA + H2O = butanoate + CoA + H(+). It participates in lipid metabolism; fatty acid metabolism. Its function is as follows. Has an acyl-CoA thioesterase activity with a preference for the long chain fatty acyl-CoA thioesters hexadecanoyl-CoA/palmitoyl-CoA and tetradecanoyl-CoA/myristoyl-CoA which are the main substrates in the mitochondrial beta-oxidation pathway. The chain is Acyl-coenzyme A thioesterase 11 (Acot11) from Mus musculus (Mouse).